The primary structure comprises 429 residues: UDP-N-acetylglucosamine 1-carboxyvinyltransferase (429 aa).

22-23 (KN) contacts phosphoenolpyruvate. Arg102 serves as a coordination point for UDP-N-acetyl-alpha-D-glucosamine. The active-site Proton donor is the Cys126. At Cys126 the chain carries 2-(S-cysteinyl)pyruvic acid O-phosphothioketal. Residues 131 to 135 (RPVDL), Asp316, and Ile338 each bind UDP-N-acetyl-alpha-D-glucosamine.

The protein belongs to the EPSP synthase family. MurA subfamily.

The protein resides in the cytoplasm. It carries out the reaction phosphoenolpyruvate + UDP-N-acetyl-alpha-D-glucosamine = UDP-N-acetyl-3-O-(1-carboxyvinyl)-alpha-D-glucosamine + phosphate. The protein operates within cell wall biogenesis; peptidoglycan biosynthesis. Its function is as follows. Cell wall formation. Adds enolpyruvyl to UDP-N-acetylglucosamine. The protein is UDP-N-acetylglucosamine 1-carboxyvinyltransferase of Methylobacterium sp. (strain 4-46).